A 234-amino-acid polypeptide reads, in one-letter code: MNQSYFPHHQSDLSLQRVEAALDALRAGQGVLVTDDEQRENEGDLIFAAQSLTREQVAMLIRECSGIVCLCLTDEAVRRLDLPLMVSDNSSRYQTAFTVSIEAAEGVTTGVSAADRLTTIRAAIADDAGPLCLSRPGHVFPLRARPGGVLERRGHTEATVDLMRLAGLKPCGVLCELTNPDGSMARMPEIVAFSRKHGFPLITVEELVQYRIVREQPAALLQAEAESAGALCSA.

D-ribulose 5-phosphate contacts are provided by residues R39–E40, D44, R152–T156, and E176. E40 contributes to the Mg(2+) binding site. H155 contributes to the Mg(2+) binding site.

This sequence belongs to the DHBP synthase family. As to quaternary structure, homodimer. The cofactor is Mg(2+). Requires Mn(2+) as cofactor.

The catalysed reaction is D-ribulose 5-phosphate = (2S)-2-hydroxy-3-oxobutyl phosphate + formate + H(+). It functions in the pathway cofactor biosynthesis; riboflavin biosynthesis; 2-hydroxy-3-oxobutyl phosphate from D-ribulose 5-phosphate: step 1/1. Its function is as follows. Catalyzes the conversion of D-ribulose 5-phosphate to formate and 3,4-dihydroxy-2-butanone 4-phosphate. In Pelobacter propionicus (strain DSM 2379 / NBRC 103807 / OttBd1), this protein is 3,4-dihydroxy-2-butanone 4-phosphate synthase.